The chain runs to 720 residues: Phosphatase and actin regulator 4 (720 aa).

The segment at 1–48 is disordered; sequence MGQPRFSRPVHPAAAAEEVDHPPSDAGMGVDVLESGDTTPPTKRKSKF. Residues 74–99 form an RPEL 1 repeat; sequence EVLERKISMRKPREELVKRGVLLEDP. 3 disordered regions span residues 294–417, 454–568, and 610–648; these read SGTG…GLPR, NDGF…DTLA, and RPTAEELEQRNILQPKNEADRQAEKREIKRRLTRKLSQR. Residues 346–368 show a composition bias toward pro residues; sequence TYPPPSPSPPLPTHIPPEPPRMP. Positions 393-405 are enriched in basic and acidic residues; it reads KDFRSLEVSKRTA. Acidic residues-rich tracts occupy residues 481-494, 521-534, and 542-551; these read DDEEEEEEDQEEEQ, EEQEGEEGMSDSDS, and DDEEDEEEDE. RPEL repeat units follow at residues 601–626 and 639–664; these read TTLIRRLSQRPTAEELEQRNILQPKN and RRLTRKLSQRPTVAELQARKILRFNE. Basic and acidic residues predominate over residues 626–636; it reads NEADRQAEKRE. Basic residues predominate over residues 637–646; it reads IKRRLTRKLS.

The protein belongs to the phosphatase and actin regulator family. In terms of assembly, binds PPP1CA and actin.

The protein resides in the cytoplasm. It is found in the cell projection. Its subcellular location is the lamellipodium. Functionally, regulator of protein phosphatase 1 (PP1) required for neural tube and optic fissure closure, and enteric neural crest cell (ENCCs) migration during development. Acts as an activator of PP1. During neural tube closure, localizes to the ventral neural tube and activates PP1, leading to down-regulate cell proliferation within cranial neural tissue and the neural retina. Also acts as a regulator of migration of enteric neural crest cells (ENCCs) by activating PP1, leading to repression of the integrin signaling through the RHO/ROCK pathway. The protein is Phosphatase and actin regulator 4 (PHACTR4) of Gallus gallus (Chicken).